We begin with the raw amino-acid sequence, 62 residues long: Large ribosomal subunit protein bL28 (62 aa).

The disordered stretch occupies residues M1–K26. A compositionally biased stretch (polar residues) spans S11–H20.

This sequence belongs to the bacterial ribosomal protein bL28 family.

This Exiguobacterium sibiricum (strain DSM 17290 / CCUG 55495 / CIP 109462 / JCM 13490 / 255-15) protein is Large ribosomal subunit protein bL28.